Consider the following 243-residue polypeptide: 3-deoxy-manno-octulosonate cytidylyltransferase (243 aa).

The protein belongs to the KdsB family.

It is found in the cytoplasm. The catalysed reaction is 3-deoxy-alpha-D-manno-oct-2-ulosonate + CTP = CMP-3-deoxy-beta-D-manno-octulosonate + diphosphate. The protein operates within nucleotide-sugar biosynthesis; CMP-3-deoxy-D-manno-octulosonate biosynthesis; CMP-3-deoxy-D-manno-octulosonate from 3-deoxy-D-manno-octulosonate and CTP: step 1/1. It participates in bacterial outer membrane biogenesis; lipopolysaccharide biosynthesis. Its function is as follows. Activates KDO (a required 8-carbon sugar) for incorporation into bacterial lipopolysaccharide in Gram-negative bacteria. The protein is 3-deoxy-manno-octulosonate cytidylyltransferase of Helicobacter pylori (strain P12).